Reading from the N-terminus, the 392-residue chain is MVKWRNNMNINELKKEFIKIYGEGSMRNFFSPGRVNLIGEHIDYNGGHVFPCALNFGTLGCVRKRKDNKVNLASTNIPLKVSINLEDIKYEKKHGWGNYPKGVIKEIIDKGYKVGGMDILISGNIPNGSGLSSSASLELLIAIMINNIFNDGKLDKVELIKLSQKAENDFVGLNCGIMDQFAVAMGKKDMAILLDCNTLEYKYAPVDLGNYVITIMNTNKRRELSDSKYNERRLECEKALKLINKEKKINYLCELSLEEFESLKYLIKDNRVLNRATHVVYENERVKRAYYLLSKRNLKEFGKLLAESHFSLRDLYEVTGKELDAIVGEALNVSGCIGARMIGAGFGGCAIALVEKSKLDLFKKKVSNNYNKIIGYKPGFYTSEIGEGTYEI.

Substrate is bound at residue 40-43 (EHID). ATP is bound by residues serine 74 and 128–134 (GSGLSSS). 2 residues coordinate Mg(2+): serine 134 and glutamate 167. Aspartate 179 acts as the Proton acceptor in catalysis. Residue tyrosine 229 participates in substrate binding.

It belongs to the GHMP kinase family. GalK subfamily.

It is found in the cytoplasm. The catalysed reaction is alpha-D-galactose + ATP = alpha-D-galactose 1-phosphate + ADP + H(+). It participates in carbohydrate metabolism; galactose metabolism. Its function is as follows. Catalyzes the transfer of the gamma-phosphate of ATP to D-galactose to form alpha-D-galactose-1-phosphate (Gal-1-P). This is Galactokinase from Clostridium tetani (strain Massachusetts / E88).